The primary structure comprises 985 residues: Invasin (985 aa).

The tract at residues 494-594 (SVTVQQPQLT…RQSVDTHFVK (101 aa)) is D1. At 494-985 (SVTVQQPQLT…LAFPLCALAI (492 aa)) the chain is on the extracellular side. 2 Big-1 domains span residues 503–594 (TLTA…HFVK) and 601–691 (KSTL…VNFT). A D2 region spans residues 595–694 (GTIAADKSTL…SVTVNFTADP (100 aa)). The tract at residues 695–794 (IPDAGRSSFT…LQKKISLFPV (100 aa)) is D3. The interval 795-886 (PTLTGILVNG…YSVSYRFYPN (92 aa)) is D4. The tract at residues 795–985 (PTLTGILVNG…LAFPLCALAI (191 aa)) is integrin-binding. Positions 887–985 (RWIYDGGTSL…LAFPLCALAI (99 aa)) are D5. Residues cysteine 906 and cysteine 981 are joined by a disulfide bond.

The protein belongs to the intimin/invasin family.

The protein resides in the cell surface. Its function is as follows. Invasin is a protein that allows enteric bacteria to penetrate cultured mammalian cells. The entry of invasin in the cell is mediated by binding several beta-1 chain integrins. In Yersinia pseudotuberculosis serotype I (strain IP32953), this protein is Invasin.